The chain runs to 1033 residues: Collagen alpha-2(I) chain (1033 aa).

The interval 1-1033 (SGGFDFSFLP…FGYEGDFYRA (1033 aa)) is disordered. Composition is skewed to low complexity over residues 25–71 (LGPG…ARGP), 154–175 (SRGS…SAGP), and 221–242 (PGAN…AGAP). Gly residues predominate over residues 276–285 (GESGGKGEPG). Positions 286–296 (SAGPQGPPGSS) are enriched in low complexity. Residues 318-327 (GLRGGPGSRG) show a composition bias toward gly residues. 2 stretches are compositionally biased toward low complexity: residues 340–356 (PAGA…RGPS) and 391–410 (LPGI…RGEA). Positions 459–468 (GVQGGKGEQG) are enriched in gly residues. 2 stretches are compositionally biased toward low complexity: residues 519–528 (PSGAIGSRGP) and 540–550 (EPGVVGAPGTA). The span at 551–560 (GPAGSGGLPG) shows a compositional bias: gly residues. Low complexity-rich tracts occupy residues 583-627 (VGTT…PRGS) and 634-654 (VGPA…QPGA). Basic and acidic residues predominate over residues 655-664 (KGERGTKGPK). Positions 672–682 (PTGPVGSAGPA) are enriched in low complexity. A compositionally biased stretch (gly residues) spans 692-701 (GSRGDGGPPG). Residues 703–712 (TGFPGAAGRT) are compositionally biased toward low complexity. A compositionally biased stretch (gly residues) spans 749-758 (GETGAGGPPG). Composition is skewed to low complexity over residues 766–793 (SGEP…LGLP) and 801–811 (LPGVAGAVGEP). The segment covering 812–834 (GPLGIGPPGARGPSGGVGPGVNG) has biased composition (gly residues). Residues 873-909 (AAGAPGPHGAVGPAGKHGNRGEPGPVGSAGPVGALGP) show a composition bias toward low complexity. Basic and acidic residues predominate over residues 919 to 930 (RGDKGEAGDKGP). A compositionally biased stretch (pro residues) spans 1003–1015 (SGPPGPPGPPGPP).

The protein belongs to the fibrillar collagen family. As to quaternary structure, trimers of one alpha 2(I) and two alpha 1(I) chains. Interacts (via C-terminus) with TMEM131 (via PapD-L domain); the interaction is direct and is involved in assembly and TRAPPIII ER-to-Golgi transport complex-dependent secretion of collagen. Post-translationally, prolines at the third position of the tripeptide repeating unit (G-X-Y) are hydroxylated in some or all of the chains. As to expression, expressed in bone.

The protein localises to the secreted. It is found in the extracellular space. The protein resides in the extracellular matrix. In terms of biological role, type I collagen is a member of group I collagen (fibrillar forming collagen). This Mylodon darwinii (Giant ground sloth) protein is Collagen alpha-2(I) chain.